A 238-amino-acid chain; its full sequence is Probable xyloglucan-specific endo-beta-1,4-glucanase A (238 aa).

A signal peptide spans 1-18 (MKFSLSVALSLAAATAQA). N-linked (GlcNAc...) asparagine glycosylation is found at Asn106 and Asn171.

Belongs to the glycosyl hydrolase 12 (cellulase H) family.

The protein localises to the secreted. The catalysed reaction is xyloglucan + H2O = xyloglucan oligosaccharides.. Functionally, catalyzes endohydrolysis of 1,4-beta-D-glucosidic linkages in xyloglucan with retention of the beta-configuration of the glycosyl residues. Specific for xyloglucan and does not hydrolyze other cell wall components. In Neosartorya fischeri (strain ATCC 1020 / DSM 3700 / CBS 544.65 / FGSC A1164 / JCM 1740 / NRRL 181 / WB 181) (Aspergillus fischerianus), this protein is Probable xyloglucan-specific endo-beta-1,4-glucanase A (xgeA).